A 453-amino-acid chain; its full sequence is Cytochrome b-c1 complex subunit 2, mitochondrial (453 aa).

The N-terminal 14 residues, 1-14, are a transit peptide targeting the mitochondrion; the sequence is MKLLSRAGSFSRFY. 3 positions are modified to N6-acetyllysine: lysine 66, lysine 199, and lysine 250. Phosphoserine is present on serine 368.

This sequence belongs to the peptidase M16 family. UQCRC2/QCR2 subfamily. In terms of assembly, component of the ubiquinol-cytochrome c oxidoreductase (cytochrome b-c1 complex, complex III, CIII), a multisubunit enzyme composed of 11 subunits. The complex is composed of 3 respiratory subunits cytochrome b, cytochrome c1 and Rieske protein UQCRFS1, 2 core protein subunits UQCRC1/QCR1 and UQCRC2/QCR2, and 6 low-molecular weight protein subunits UQCRH/QCR6, UQCRB/QCR7, UQCRQ/QCR8, UQCR10/QCR9, UQCR11/QCR10 and subunit 9, the cleavage product of Rieske protein UQCRFS1. The complex exists as an obligatory dimer and forms supercomplexes (SCs) in the inner mitochondrial membrane with NADH-ubiquinone oxidoreductase (complex I, CI) and cytochrome c oxidase (complex IV, CIV), resulting in different assemblies (supercomplex SCI(1)III(2)IV(1) and megacomplex MCI(2)III(2)IV(2)). Interacts with RAB5IF. Interacts with STMP1. In terms of processing, acetylation of Lys-159 and Lys-250 is observed in liver mitochondria from fasted mice but not from fed mice. As to expression, expressed in neurons and astrocytes of the cerebral cortex and hippocampus (at protein level).

It is found in the mitochondrion inner membrane. Component of the ubiquinol-cytochrome c oxidoreductase, a multisubunit transmembrane complex that is part of the mitochondrial electron transport chain which drives oxidative phosphorylation. The respiratory chain contains 3 multisubunit complexes succinate dehydrogenase (complex II, CII), ubiquinol-cytochrome c oxidoreductase (cytochrome b-c1 complex, complex III, CIII) and cytochrome c oxidase (complex IV, CIV), that cooperate to transfer electrons derived from NADH and succinate to molecular oxygen, creating an electrochemical gradient over the inner membrane that drives transmembrane transport and the ATP synthase. The cytochrome b-c1 complex catalyzes electron transfer from ubiquinol to cytochrome c, linking this redox reaction to translocation of protons across the mitochondrial inner membrane, with protons being carried across the membrane as hydrogens on the quinol. In the process called Q cycle, 2 protons are consumed from the matrix, 4 protons are released into the intermembrane space and 2 electrons are passed to cytochrome c. The 2 core subunits UQCRC1/QCR1 and UQCRC2/QCR2 are homologous to the 2 mitochondrial-processing peptidase (MPP) subunits beta-MPP and alpha-MPP respectively, and they seem to have preserved their MPP processing properties. May be involved in the in situ processing of UQCRFS1 into the mature Rieske protein and its mitochondrial targeting sequence (MTS)/subunit 9 when incorporated into complex III. The sequence is that of Cytochrome b-c1 complex subunit 2, mitochondrial (Uqcrc2) from Mus musculus (Mouse).